Reading from the N-terminus, the 276-residue chain is Odontogenic ameloblast-associated protein (276 aa).

The N-terminal stretch at 1–15 (MRTLILLGILGATMS) is a signal peptide. Residues T101, T113, and T117 are each glycosylated (O-linked (GalNAc...) threonine). The tract at residues 125–127 (MPS) is interaction with ARHGEF5. O-linked (GalNAc...) serine glycosylation is present at S246. O-linked (GalNAc...) threonine glycosylation is found at T247, T248, and T252. A glycan (O-linked (GalNAc...) serine) is linked at S253. O-linked (GalNAc...) threonine glycans are attached at residues T254, T258, T260, and T270. A glycan (O-linked (GalNAc...) serine) is linked at S272.

Belongs to the ODAM family. Interacts (via C-terminus) with ARHGEF5. Post-translationally, O-glycosylated.

Its subcellular location is the secreted. The protein resides in the cytoplasm. It is found in the nucleus. Tooth-associated epithelia protein that probably plays a role in odontogenesis, the complex process that results in the initiation and generation of the tooth. May be incorporated in the enamel matrix at the end of mineralization process. Involved in the induction of RHOA activity via interaction with ARHGEF and expression of downstream factors such as ROCK. Plays a role in attachment of the junctional epithelium to the tooth surface. This chain is Odontogenic ameloblast-associated protein (ODAM), found in Sus scrofa (Pig).